A 377-amino-acid chain; its full sequence is MKIVVDENMPHALELFAEFGEVIPLPGRQMQAVDLQDADVLLVRSVTRVDAELLATSPRLRFVGTATIGTDHVDKALLAVRNIPFFSAPGCNKYSVGDYVLSTLLVLAERHELNLREMSLAVIGAGNTGECVACKAEALGMRVLRCDPPRARVAGQAGETDAFVDYQTALGADIVSFHVPITREGPDATFHLLDEQVIAARPAGQILVNASRGEVWDNQALLARQQGLEPLRLVMDVWEGEPEPLRALVPHTEIATPHIAGYSLEGKARGTWMLYQALCQQLGRAARQDLQSLLPAPEVRALTPGQPVDQALIKQLVHLIYDVRRDDARFRNRIELPGSFDEQRKHYPERRELSSLHVNGPFASDTLARLGFTVQPG.

Residues Ser45 and Thr67 each contribute to the substrate site. NAD(+) is bound by residues Asp147, 210–212 (ASR), and Asp236. The active site involves Arg212. Residue Glu241 is part of the active site. Residue His258 is the Proton donor of the active site. Gly261 contacts NAD(+). Residue Tyr262 coordinates substrate.

The protein belongs to the D-isomer specific 2-hydroxyacid dehydrogenase family. PdxB subfamily. Homodimer.

The protein localises to the cytoplasm. It carries out the reaction 4-phospho-D-erythronate + NAD(+) = (R)-3-hydroxy-2-oxo-4-phosphooxybutanoate + NADH + H(+). The protein operates within cofactor biosynthesis; pyridoxine 5'-phosphate biosynthesis; pyridoxine 5'-phosphate from D-erythrose 4-phosphate: step 2/5. Functionally, catalyzes the oxidation of erythronate-4-phosphate to 3-hydroxy-2-oxo-4-phosphonooxybutanoate. This chain is Erythronate-4-phosphate dehydrogenase, found in Aeromonas salmonicida (strain A449).